Reading from the N-terminus, the 492-residue chain is Transmembrane protein 104 homolog (492 aa).

Topologically, residues M1 to V17 are cytoplasmic. Residues G18 to F38 form a helical membrane-spanning segment. The Extracellular segment spans residues Q39 to L44. The helical transmembrane segment at L45–I65 threads the bilayer. Over E66–K113 the chain is Cytoplasmic. The helical transmembrane segment at V114–Y134 threads the bilayer. Over S135 to R176 the chain is Extracellular. A glycan (N-linked (GlcNAc...) asparagine) is linked at N151. A helical transmembrane segment spans residues F177–K197. Over T198–R209 the chain is Cytoplasmic. The helical transmembrane segment at W210–A230 threads the bilayer. Residues A231 to N237 lie on the Extracellular side of the membrane. The helical transmembrane segment at F238–I258 threads the bilayer. The Cytoplasmic segment spans residues P259–K274. A helical transmembrane segment spans residues I275–F295. At A296–F324 the chain is on the extracellular side. A glycan (N-linked (GlcNAc...) asparagine) is linked at N313. Residues L325–I345 form a helical membrane-spanning segment. Residues N346–S392 are Cytoplasmic-facing. A helical transmembrane segment spans residues V393–T413. Residues D414–D415 are Extracellular-facing. A helical membrane pass occupies residues M416–P436. Residues C437 to P466 are Cytoplasmic-facing. The chain crosses the membrane as a helical span at residues I467–L487. The Extracellular portion of the chain corresponds to V488–F492.

It belongs to the TMEM104 family.

It localises to the membrane. This chain is Transmembrane protein 104 homolog, found in Caenorhabditis elegans.